The following is a 301-amino-acid chain: Ribonuclease HIII (301 aa).

The RNase H type-2 domain maps to 84–301 (ASAIGSDEVG…TEKAARIAKK (218 aa)). A divalent metal cation-binding residues include Asp90, Glu91, and Asp195.

Belongs to the RNase HII family. RnhC subfamily. The cofactor is Mn(2+). Mg(2+) serves as cofactor.

The protein resides in the cytoplasm. It catalyses the reaction Endonucleolytic cleavage to 5'-phosphomonoester.. Endonuclease that specifically degrades the RNA of RNA-DNA hybrids. In Geobacillus sp. (strain WCH70), this protein is Ribonuclease HIII.